The following is a 157-amino-acid chain: Galactose-specific lectin (157 aa).

In terms of domain architecture, Jacalin-type lectin spans 12–157 (SIVVGTWGAE…LDYIGFHLAL (146 aa)). An N-linked (GlcNAc...) asparagine glycan is attached at Asn45.

This sequence belongs to the jacalin lectin family. Tetramer of heterodimers of light and heavy chains which are non-covalently linked. N-linked carbohydrates at Asn-45 can be of complex or paucimannose type.

Its function is as follows. Alpha-D-galactose-specific lectin. Has hemagglutinating activity towards human and rabbit erythrocytes. Is highly cytotoxic to human cells in vitro. The chain is Galactose-specific lectin from Morus indica (Mulberry).